A 71-amino-acid chain; its full sequence is Large ribosomal subunit protein bL31 (71 aa).

Zn(2+) is bound by residues cysteine 16, cysteine 18, cysteine 37, and cysteine 40.

The protein belongs to the bacterial ribosomal protein bL31 family. Type A subfamily. As to quaternary structure, part of the 50S ribosomal subunit. The cofactor is Zn(2+).

In terms of biological role, binds the 23S rRNA. The sequence is that of Large ribosomal subunit protein bL31 from Marinomonas sp. (strain MWYL1).